Reading from the N-terminus, the 514-residue chain is Nucleus accumbens-associated protein 1 (514 aa).

A BTB domain is found at Cys30–Met94. Lys167 is covalently cross-linked (Glycyl lysine isopeptide (Lys-Gly) (interchain with G-Cter in SUMO1); alternate). Lys167 is covalently cross-linked (Glycyl lysine isopeptide (Lys-Gly) (interchain with G-Cter in SUMO2); alternate). Lys182 is covalently cross-linked (Glycyl lysine isopeptide (Lys-Gly) (interchain with G-Cter in SUMO2)). Disordered stretches follow at residues Arg183–Pro218 and Gly241–Thr279. Phosphoserine is present on Ser187. Over residues Pro242–Gly251 the composition is skewed to polar residues. A Phosphoserine; by PKC modification is found at Ser245. The segment covering Thr252–Tyr264 has biased composition (low complexity). Positions Glu267–Thr279 are enriched in acidic residues. Residues Lys304, Lys438, Lys466, and Lys485 each participate in a glycyl lysine isopeptide (Lys-Gly) (interchain with G-Cter in SUMO2) cross-link. One can recognise a BEN domain in the interval Gly360–Val457. Phosphoserine is present on residues Ser492 and Ser496.

In terms of assembly, homooligomer; mediated by the BTB domain. Both isoforms interact with HDAC3 and HDAC4. Interacts (via BTB domain) with CUL3, PSMD7 and RCOR1. In terms of processing, phosphorylated by protein kinase C (PKC). Highly expressed in the hippocampus, brain cortex, cerebellum and brainstem. Expressed in the nucleus accumbens, olfactory tubercle, the striatum, frontal and parietal cortex and ventral pallidum. Weakly expressed in the heart, liver, kidney, spleen, testis, and skeletal muscle. Isoform 2 is expressed in the brain and liver, less abundantly expressed in the brain than isoform 1.

It localises to the nucleus. The protein resides in the cytoplasm. In terms of biological role, functions as a transcriptional repressor. Isoform 1 is a stronger transcriptional repressor than isoform 2. Seems to function as a transcriptional corepressor in neuronal cells through recruitment of HDAC3 and HDAC4. Contributes to tumor progression, and tumor cell proliferation and survival. This may be mediated at least in part through repressing transcriptional activity of GADD45GIP1. Required for recruiting the proteasome from the nucleus to the cytoplasm and dendritic spines. The chain is Nucleus accumbens-associated protein 1 (Nacc1) from Rattus norvegicus (Rat).